Here is a 236-residue protein sequence, read N- to C-terminus: Purine nucleoside phosphorylase DeoD-type (236 aa).

H5 provides a ligand contact to a purine D-ribonucleoside. Residues G21, R25, R44, and 88–91 contribute to the phosphate site; that span reads RVGT. A purine D-ribonucleoside-binding positions include 180–182 and 204–205; these read EME and SD. The Proton donor role is filled by D205.

Belongs to the PNP/UDP phosphorylase family. Homohexamer; trimer of homodimers.

The catalysed reaction is a purine D-ribonucleoside + phosphate = a purine nucleobase + alpha-D-ribose 1-phosphate. The enzyme catalyses a purine 2'-deoxy-D-ribonucleoside + phosphate = a purine nucleobase + 2-deoxy-alpha-D-ribose 1-phosphate. Functionally, catalyzes the reversible phosphorolytic breakdown of the N-glycosidic bond in the beta-(deoxy)ribonucleoside molecules, with the formation of the corresponding free purine bases and pentose-1-phosphate. The chain is Purine nucleoside phosphorylase DeoD-type from Shewanella frigidimarina (strain NCIMB 400).